A 238-amino-acid chain; its full sequence is Ribonuclease PH (238 aa).

Residues Arg86 and 124–126 (GTR) each bind phosphate.

The protein belongs to the RNase PH family. Homohexameric ring arranged as a trimer of dimers.

It catalyses the reaction tRNA(n+1) + phosphate = tRNA(n) + a ribonucleoside 5'-diphosphate. Phosphorolytic 3'-5' exoribonuclease that plays an important role in tRNA 3'-end maturation. Removes nucleotide residues following the 3'-CCA terminus of tRNAs; can also add nucleotides to the ends of RNA molecules by using nucleoside diphosphates as substrates, but this may not be physiologically important. Probably plays a role in initiation of 16S rRNA degradation (leading to ribosome degradation) during starvation. The polypeptide is Ribonuclease PH (Shigella dysenteriae serotype 1 (strain Sd197)).